A 408-amino-acid chain; its full sequence is Argininosuccinate synthase (408 aa).

ATP contacts are provided by residues 12-20 (AYSGGLDTS) and alanine 39. Tyrosine 90 and serine 95 together coordinate L-citrulline. Residue glycine 120 coordinates ATP. Threonine 122, asparagine 126, and aspartate 127 together coordinate L-aspartate. Asparagine 126 lines the L-citrulline pocket. Positions 130, 181, 190, 266, and 278 each coordinate L-citrulline.

This sequence belongs to the argininosuccinate synthase family. Type 1 subfamily. As to quaternary structure, homotetramer.

The protein resides in the cytoplasm. It carries out the reaction L-citrulline + L-aspartate + ATP = 2-(N(omega)-L-arginino)succinate + AMP + diphosphate + H(+). It functions in the pathway amino-acid biosynthesis; L-arginine biosynthesis; L-arginine from L-ornithine and carbamoyl phosphate: step 2/3. The sequence is that of Argininosuccinate synthase from Methylococcus capsulatus (strain ATCC 33009 / NCIMB 11132 / Bath).